The primary structure comprises 511 residues: Cobyric acid synthase (511 aa).

The region spanning 251-443 is the GATase cobBQ-type domain; that stretch reads LLDIAIICLP…IHGIFDNDVF (193 aa). C332 (nucleophile) is an active-site residue. The active site involves H435.

This sequence belongs to the CobB/CobQ family. CobQ subfamily.

The protein operates within cofactor biosynthesis; adenosylcobalamin biosynthesis. In terms of biological role, catalyzes amidations at positions B, D, E, and G on adenosylcobyrinic A,C-diamide. NH(2) groups are provided by glutamine, and one molecule of ATP is hydrogenolyzed for each amidation. The chain is Cobyric acid synthase from Listeria monocytogenes serovar 1/2a (strain ATCC BAA-679 / EGD-e).